The following is a 505-amino-acid chain: RNA-splicing ligase RtcB homolog (505 aa).

4 residues coordinate Mn(2+): Asp119, Cys122, His227, and His259. 226 to 230 (NHYAE) is a GMP binding site. At Ser300 the chain carries Phosphoserine. His353 contacts Mn(2+). Residues 353-354 (HN), 402-405 (GGTM), Ser409, and 428-431 (HGAG) contribute to the GMP site. His428 (GMP-histidine intermediate) is an active-site residue. A Glycyl lysine isopeptide (Lys-Gly) (interchain with G-Cter in SUMO2) cross-link involves residue Lys496. GMP is bound at residue Lys504.

The protein belongs to the RtcB family. Catalytic component of the tRNA-splicing ligase complex. Mn(2+) is required as a cofactor.

It localises to the nucleus. The protein localises to the cytoplasm. It carries out the reaction a 3'-end 3'-phospho-ribonucleotide-RNA + a 5'-end dephospho-ribonucleoside-RNA + GTP = a ribonucleotidyl-ribonucleotide-RNA + GMP + diphosphate. The enzyme catalyses a 3'-end 2',3'-cyclophospho-ribonucleotide-RNA + a 5'-end dephospho-ribonucleoside-RNA + GTP + H2O = a ribonucleotidyl-ribonucleotide-RNA + GMP + diphosphate + H(+). In terms of biological role, catalytic subunit of the tRNA-splicing ligase complex that acts by directly joining spliced tRNA halves to mature-sized tRNAs by incorporating the precursor-derived splice junction phosphate into the mature tRNA as a canonical 3',5'-phosphodiester. May act as an RNA ligase with broad substrate specificity, and may function toward other RNAs. The chain is RNA-splicing ligase RtcB homolog from Sus scrofa (Pig).